A 1095-amino-acid polypeptide reads, in one-letter code: DNA-directed RNA polymerase subunit beta'' (1095 aa).

Zn(2+) is bound by residues C220, C293, C300, and C303.

This sequence belongs to the RNA polymerase beta' chain family. RpoC2 subfamily. In terms of assembly, in plastids the minimal PEP RNA polymerase catalytic core is composed of four subunits: alpha, beta, beta', and beta''. When a (nuclear-encoded) sigma factor is associated with the core the holoenzyme is formed, which can initiate transcription. Requires Zn(2+) as cofactor.

It is found in the plastid. Its subcellular location is the chloroplast. It catalyses the reaction RNA(n) + a ribonucleoside 5'-triphosphate = RNA(n+1) + diphosphate. Its function is as follows. DNA-dependent RNA polymerase catalyzes the transcription of DNA into RNA using the four ribonucleoside triphosphates as substrates. The polypeptide is DNA-directed RNA polymerase subunit beta'' (Zygnema circumcarinatum (Green alga)).